Consider the following 205-residue polypeptide: Adenylyl-sulfate kinase (205 aa).

Residue 31-38 (GLSGAGKS) coordinates ATP. Ser105 (phosphoserine intermediate) is an active-site residue.

It belongs to the APS kinase family.

The catalysed reaction is adenosine 5'-phosphosulfate + ATP = 3'-phosphoadenylyl sulfate + ADP + H(+). It participates in sulfur metabolism; hydrogen sulfide biosynthesis; sulfite from sulfate: step 2/3. Its function is as follows. Catalyzes the synthesis of activated sulfate. This is Adenylyl-sulfate kinase from Shewanella baltica (strain OS195).